We begin with the raw amino-acid sequence, 286 residues long: Puff II/9-1 protein (286 aa).

Residues 1–19 (MKQFIVLTVVLLAIQELQG) form the signal peptide. Positions 61–235 (ITAIKKDNDF…ENALNTLRCE (175 aa)) are helical. Asn156 is a glycosylation site (N-linked (GlcNAc...) asparagine).

This chain is Puff II/9-1 protein (II/9-1), found in Bradysia coprophila (Dark-winged fungus gnat).